A 440-amino-acid polypeptide reads, in one-letter code: Xylose isomerase (440 aa).

Asp-307 and Asp-309 together coordinate Mg(2+).

This sequence belongs to the xylose isomerase family. Homotetramer. Mg(2+) is required as a cofactor.

It localises to the cytoplasm. It carries out the reaction alpha-D-xylose = alpha-D-xylulofuranose. The chain is Xylose isomerase from Pectobacterium carotovorum subsp. carotovorum (strain PC1).